The following is a 435-amino-acid chain: Methylenetetrahydrofolate--tRNA-(uracil-5-)-methyltransferase TrmFO (435 aa).

FAD is bound at residue 9 to 14; the sequence is GAGLAG.

It belongs to the MnmG family. TrmFO subfamily. Requires FAD as cofactor.

It is found in the cytoplasm. The catalysed reaction is uridine(54) in tRNA + (6R)-5,10-methylene-5,6,7,8-tetrahydrofolate + NADH + H(+) = 5-methyluridine(54) in tRNA + (6S)-5,6,7,8-tetrahydrofolate + NAD(+). The enzyme catalyses uridine(54) in tRNA + (6R)-5,10-methylene-5,6,7,8-tetrahydrofolate + NADPH + H(+) = 5-methyluridine(54) in tRNA + (6S)-5,6,7,8-tetrahydrofolate + NADP(+). Its function is as follows. Catalyzes the folate-dependent formation of 5-methyl-uridine at position 54 (M-5-U54) in all tRNAs. This Enterococcus faecalis (strain ATCC 700802 / V583) protein is Methylenetetrahydrofolate--tRNA-(uracil-5-)-methyltransferase TrmFO.